A 374-amino-acid polypeptide reads, in one-letter code: Putative glutamate--cysteine ligase 2 (374 aa).

The protein belongs to the glutamate--cysteine ligase type 2 family. YbdK subfamily.

The catalysed reaction is L-cysteine + L-glutamate + ATP = gamma-L-glutamyl-L-cysteine + ADP + phosphate + H(+). Functionally, ATP-dependent carboxylate-amine ligase which exhibits weak glutamate--cysteine ligase activity. This Acidovorax ebreus (strain TPSY) (Diaphorobacter sp. (strain TPSY)) protein is Putative glutamate--cysteine ligase 2.